The sequence spans 73 residues: MVCTQRVAGLGHMNLRILENNKGKKVVAVDPVGAREGNWVFTASGSAARFACPNPEVQTDLTIGGIIDYWESN.

A BMV domain is found at 1-68 (MVCTQRVAGL…TDLTIGGIID (68 aa)).

This sequence belongs to the CcmL/EutN family. CsoS4 subfamily. In terms of assembly, homopentamer.

Its subcellular location is the carboxysome. Functionally, probably forms vertices in the carboxysome, a polyhedral inclusion where RuBisCO (ribulose bisphosphate carboxylase, cbbL-cbbS) is sequestered. Has been modeled to induce curvature upon insertion into an otherwise flat hexagonal layer of major carboxysome subunits. Has not been identified in purified carboxysomes; it is expected to be present in very low amounts. This chain is Carboxysome shell vertex protein CsoS4B, found in Prochlorococcus marinus subsp. pastoris (strain CCMP1986 / NIES-2087 / MED4).